A 318-amino-acid polypeptide reads, in one-letter code: Lysophospholipase D GDPD3 (318 aa).

At methionine 1–serine 2 the chain is on the cytoplasmic side. Residues leucine 3–leucine 23 traverse the membrane as a helical segment. At arginine 24–serine 198 the chain is on the extracellular side. The GP-PDE domain maps to isoleucine 39–leucine 308. Residues glutamate 71, aspartate 73, and histidine 86 each coordinate a divalent metal cation. The chain crosses the membrane as a helical span at residues phenylalanine 199–isoleucine 221. Topologically, residues proline 222–serine 318 are cytoplasmic.

Belongs to the glycerophosphoryl diester phosphodiesterase family. As to expression, widely expressed, with high level in kidney and ovary.

The protein localises to the membrane. The protein resides in the cytoplasm. Its subcellular location is the perinuclear region. It localises to the endoplasmic reticulum. The catalysed reaction is 1-hexadecanoyl-sn-glycero-3-phosphocholine + H2O = 1-hexadecanoyl-sn-glycero-3-phosphate + choline + H(+). It carries out the reaction 1-hexadecanoyl-sn-glycero-3-phosphocholine + H2O = sn-glycerol 3-phosphocholine + hexadecanoate + H(+). The enzyme catalyses 1-O-(1Z-octadecenyl)-sn-glycero-3-phospho-N-hexadecanoyl-ethanolamine + H2O = 1-O-(1Z-octadecenyl)-sn-glycero-3-phosphate + N-hexadecanoylethanolamine + H(+). It catalyses the reaction N-(5Z,8Z,11Z,14Z-eicosatetraenoyl)-1-(9Z-octadecenoyl)-sn-glycero-3-phosphoethanolamine + H2O = N-(5Z,8Z,11Z,14Z-eicosatetraenoyl)-ethanolamine + 1-(9Z-octadecenoyl)-sn-glycero-3-phosphate + H(+). The catalysed reaction is N,1-di-(9Z-octadecenoyl)-sn-glycero-3-phosphoethanolamine + H2O = N-(9Z-octadecenoyl) ethanolamine + 1-(9Z-octadecenoyl)-sn-glycero-3-phosphate + H(+). It carries out the reaction N-hexadecanoyl-1-(9Z-octadecenoyl)-sn-glycero-3-phosphoethanolamine + H2O = N-hexadecanoylethanolamine + 1-(9Z-octadecenoyl)-sn-glycero-3-phosphate + H(+). The enzyme catalyses 1-O-hexadecyl-sn-glycero-3-phosphocholine + H2O = 1-O-hexadecyl-sn-glycero-3-phosphate + choline + H(+). With respect to regulation, lysophospholipase D activity is stimulated by calcium. Loss of lysophospholipase D activity in presence of EDTA. In terms of biological role, hydrolyzes lysoglycerophospholipids to produce lysophosphatidic acid (LPA) and the corresponding amines. Shows a preference for 1-O-alkyl-sn-glycero-3-phosphocholine (lyso-PAF), lysophosphatidylcholine (lyso-PC) and N-acylethanolamine lysophospholipids. Does not display glycerophosphodiester phosphodiesterase activity, since it cannot hydrolyze either glycerophosphoinositol or glycerophosphocholine. This Homo sapiens (Human) protein is Lysophospholipase D GDPD3.